We begin with the raw amino-acid sequence, 561 residues long: Potassium-transporting ATPase potassium-binding subunit (561 aa).

The next 12 membrane-spanning stretches (helical) occupy residues 2 to 22, 66 to 86, 135 to 155, 177 to 197, 253 to 273, 280 to 300, 327 to 347, 354 to 374, 378 to 398, 413 to 433, 482 to 502, and 531 to 551; these read GQGL…TPVL, IRAI…LIYF, ALGF…IAFI, ILLP…VPQT, LIET…YGVF, AWLL…VAAG, FGWA…CGAV, LMPQ…IWGG, GTAY…LMVG, IVLA…PSAI, LSTS…MLLL, and AGIV…LGPI.

It belongs to the KdpA family. The system is composed of three essential subunits: KdpA, KdpB and KdpC.

Its subcellular location is the cell inner membrane. In terms of biological role, part of the high-affinity ATP-driven potassium transport (or Kdp) system, which catalyzes the hydrolysis of ATP coupled with the electrogenic transport of potassium into the cytoplasm. This subunit binds the periplasmic potassium ions and delivers the ions to the membrane domain of KdpB through an intramembrane tunnel. This is Potassium-transporting ATPase potassium-binding subunit from Nostoc sp. (strain PCC 7120 / SAG 25.82 / UTEX 2576).